A 286-amino-acid polypeptide reads, in one-letter code: 4-hydroxybenzoate octaprenyltransferase (286 aa).

Transmembrane regions (helical) follow at residues 22–42 (IGTLLLLWPTLWALYLAEKAM), 45–65 (LSVLAIFICGVFLMRSAGCVI), 98–118 (LFIVLVFCSFLLVLCLNLYTI), 143–163 (FFLGAAFGWSIPMAYGATIEA), 213–233 (IIALLQIITLIFLFSVGYLSQ), 238–255 (YFIVLAIAGLFFVYQCRL), and 266–286 (NAFLNNNYFGLTVFIAVLFGI).

It belongs to the UbiA prenyltransferase family. Mg(2+) serves as cofactor.

It is found in the cell inner membrane. It catalyses the reaction all-trans-octaprenyl diphosphate + 4-hydroxybenzoate = 4-hydroxy-3-(all-trans-octaprenyl)benzoate + diphosphate. It functions in the pathway cofactor biosynthesis; ubiquinone biosynthesis. Catalyzes the prenylation of para-hydroxybenzoate (PHB) with an all-trans polyprenyl group. Mediates the second step in the final reaction sequence of ubiquinone-8 (UQ-8) biosynthesis, which is the condensation of the polyisoprenoid side chain with PHB, generating the first membrane-bound Q intermediate 3-octaprenyl-4-hydroxybenzoate. The polypeptide is 4-hydroxybenzoate octaprenyltransferase (Histophilus somni (strain 129Pt) (Haemophilus somnus)).